The primary structure comprises 34 residues: Photosystem II reaction center protein M (34 aa).

A helical transmembrane segment spans residues 5-25 (ILAFIATALFILVPTAFLLII).

This sequence belongs to the PsbM family. In terms of assembly, PSII is composed of 1 copy each of membrane proteins PsbA, PsbB, PsbC, PsbD, PsbE, PsbF, PsbH, PsbI, PsbJ, PsbK, PsbL, PsbM, PsbT, PsbX, PsbY, PsbZ, Psb30/Ycf12, at least 3 peripheral proteins of the oxygen-evolving complex and a large number of cofactors. It forms dimeric complexes.

It localises to the plastid. The protein resides in the chloroplast thylakoid membrane. In terms of biological role, one of the components of the core complex of photosystem II (PSII). PSII is a light-driven water:plastoquinone oxidoreductase that uses light energy to abstract electrons from H(2)O, generating O(2) and a proton gradient subsequently used for ATP formation. It consists of a core antenna complex that captures photons, and an electron transfer chain that converts photonic excitation into a charge separation. This subunit is found at the monomer-monomer interface. This is Photosystem II reaction center protein M from Coffea arabica (Arabian coffee).